Reading from the N-terminus, the 436-residue chain is UPF0597 protein YhaM (436 aa).

It belongs to the UPF0597 family.

This Salmonella paratyphi C (strain RKS4594) protein is UPF0597 protein YhaM.